We begin with the raw amino-acid sequence, 745 residues long: Inhibitor of nuclear factor kappa-B kinase subunit alpha (745 aa).

One can recognise a Protein kinase domain in the interval 15–300 (WEMRERLGTG…IDLTLKQPRC (286 aa)). Residues 21–29 (LGTGGFGNV) and Lys-44 contribute to the ATP site. Phosphothreonine; by PKB/AKT1 and SGK1 is present on Thr-23. Catalysis depends on Asp-144, which acts as the Proton acceptor. The residue at position 176 (Ser-176) is a Phosphoserine; by MAP3K14. Ser-180 is modified (phosphoserine; by SGK1). The leucine-zipper stretch occupies residues 455–476 (LLRYNANLTKMKNTLISASQQL). Positions 738–743 (LDWSWL) are NEMO-binding.

The protein belongs to the protein kinase superfamily. Ser/Thr protein kinase family. I-kappa-B kinase subfamily. As to quaternary structure, component of the I-kappa-B-kinase (IKK) core complex consisting of CHUK, IKBKB and IKBKG; probably four alpha/CHUK-beta/IKBKB dimers are associated with four gamma/IKBKG subunits. The IKK core complex seems to associate with regulatory or adapter proteins to form a IKK-signalosome holo-complex. The IKK complex associates with TERF2IP/RAP1, leading to promote IKK-mediated phosphorylation of RELA/p65. Part of a complex composed of NCOA2, NCOA3, CHUK/IKKA, IKBKB, IKBKG and CREBBP. Part of a 70-90 kDa complex at least consisting of CHUK/IKKA, IKBKB, NFKBIA, RELA, ELP1 and MAP3K14. Directly interacts with TRPC4AP. May interact with TRAF2. Interacts with NALP2. May interact with MAVS/IPS1. Interacts with ARRB1 and ARRB2. Interacts with NLRC5; prevents CHUK phosphorylation and kinase activity. Interacts with PIAS1; this interaction induces PIAS1 phosphorylation. Interacts with ZNF268 isoform 2; the interaction is further increased in a TNF-alpha-dependent manner. Interacts with LRRC14. Interacts with SASH1. Directly interacts with DDX3X after the physiological activation of the TLR7 and TLR8 pathways; this interaction enhances CHUK autophosphorylation. Post-translationally, ubiquitinated by TRIM56 via 'Lys-63'-linked ubiquitination, promoting activation of CHUK/IKKA. In terms of processing, phosphorylated by MAP3K14/NIK, AKT and to a lesser extent by MEKK1, and dephosphorylated by PP2A. Autophosphorylated. Ubiquitous only for isoform 1, isoforms 2 and 3 are expressed predominantly in brain and T-lymphocytes.

It localises to the cytoplasm. It is found in the nucleus. The catalysed reaction is L-seryl-[I-kappa-B protein] + ATP = O-phospho-L-seryl-[I-kappa-B protein] + ADP + H(+). Its activity is regulated as follows. Activated when phosphorylated and inactivated when dephosphorylated. Functionally, serine kinase that plays an essential role in the NF-kappa-B signaling pathway which is activated by multiple stimuli such as inflammatory cytokines, bacterial or viral products, DNA damages or other cellular stresses. Acts as a part of the canonical IKK complex in the conventional pathway of NF-kappa-B activation and phosphorylates inhibitors of NF-kappa-B on serine residues. These modifications allow polyubiquitination of the inhibitors and subsequent degradation by the proteasome. In turn, free NF-kappa-B is translocated into the nucleus and activates the transcription of hundreds of genes involved in immune response, growth control, or protection against apoptosis. Negatively regulates the pathway by phosphorylating the scaffold protein TAXBP1 and thus promoting the assembly of the A20/TNFAIP3 ubiquitin-editing complex (composed of A20/TNFAIP3, TAX1BP1, and the E3 ligases ITCH and RNF11). Therefore, CHUK plays a key role in the negative feedback of NF-kappa-B canonical signaling to limit inflammatory gene activation. As part of the non-canonical pathway of NF-kappa-B activation, the MAP3K14-activated CHUK/IKKA homodimer phosphorylates NFKB2/p100 associated with RelB, inducing its proteolytic processing to NFKB2/p52 and the formation of NF-kappa-B RelB-p52 complexes. In turn, these complexes regulate genes encoding molecules involved in B-cell survival and lymphoid organogenesis. Also participates in the negative feedback of the non-canonical NF-kappa-B signaling pathway by phosphorylating and destabilizing MAP3K14/NIK. Within the nucleus, phosphorylates CREBBP and consequently increases both its transcriptional and histone acetyltransferase activities. Modulates chromatin accessibility at NF-kappa-B-responsive promoters by phosphorylating histones H3 at 'Ser-10' that are subsequently acetylated at 'Lys-14' by CREBBP. Additionally, phosphorylates the CREBBP-interacting protein NCOA3. Also phosphorylates FOXO3 and may regulate this pro-apoptotic transcription factor. Phosphorylates RIPK1 at 'Ser-25' which represses its kinase activity and consequently prevents TNF-mediated RIPK1-dependent cell death. Phosphorylates AMBRA1 following mitophagy induction, promoting AMBRA1 interaction with ATG8 family proteins and its mitophagic activity. The protein is Inhibitor of nuclear factor kappa-B kinase subunit alpha (Chuk) of Mus musculus (Mouse).